Consider the following 426-residue polypeptide: Enolase (426 aa).

Q163 contacts (2R)-2-phosphoglycerate. The active-site Proton donor is E205. 3 residues coordinate Mg(2+): D242, E283, and D310. K335, R364, S365, and K386 together coordinate (2R)-2-phosphoglycerate. K335 functions as the Proton acceptor in the catalytic mechanism.

The protein belongs to the enolase family. Mg(2+) serves as cofactor.

The protein localises to the cytoplasm. The protein resides in the secreted. It localises to the cell surface. The enzyme catalyses (2R)-2-phosphoglycerate = phosphoenolpyruvate + H2O. It participates in carbohydrate degradation; glycolysis; pyruvate from D-glyceraldehyde 3-phosphate: step 4/5. Functionally, catalyzes the reversible conversion of 2-phosphoglycerate (2-PG) into phosphoenolpyruvate (PEP). It is essential for the degradation of carbohydrates via glycolysis. This Clavibacter sepedonicus (Clavibacter michiganensis subsp. sepedonicus) protein is Enolase.